Reading from the N-terminus, the 726-residue chain is Myb-like protein Z (726 aa).

Disordered regions lie at residues 15–109 (DSND…SLSN), 124–149 (ASPS…YHPY), 161–239 (HYVS…TKQQ), and 272–303 (LIPS…NMRS). Low complexity predominate over residues 18 to 39 (DNNNNNNNNNNSNNNNNNNNNN). Residues 45 to 80 (SSATSSPTGQDSTIDRPNSPSSSIKFTYPSKNSIVT) are compositionally biased toward polar residues. Residues 81–108 (SPSSLQLPSPSFSSSSSSSSSSSSSSLS) are compositionally biased toward low complexity. Positions 124–147 (ASPSKSSENSPTIHTSSLSPNSYH) are enriched in polar residues. Residues 165-177 (NNNNNNNNNNNNN) show a composition bias toward low complexity. Polar residues predominate over residues 183-209 (SSELYNTSPSISSKTTPNGSSTNNSPF). Low complexity predominate over residues 221 to 239 (NNNNNNNNDRNENNTTKQQ). The 60-residue stretch at 329–388 (IPIATRKLWSQEECCRLLEMVFQRDPQSVTSKESELRWRSIASTLGRTVTSTRKKYMRLM) folds into the Myb-like domain. Positions 516-651 (KQIQQQQKQK…NNNYRSSLSP (136 aa)) are enriched in low complexity. A disordered region spans residues 516–726 (KQIQQQQKQK…NNNNYNNYHN (211 aa)). The segment covering 661–675 (QSPQQKSNNENQQNF) has biased composition (polar residues). Positions 709-726 (NLNNNNNNNNNNYNNYHN) are enriched in low complexity.

This chain is Myb-like protein Z (mybZ), found in Dictyostelium discoideum (Social amoeba).